We begin with the raw amino-acid sequence, 404 residues long: MAAVPEVLQQQEEDRSKLRSVSVDLNVDPSLQIDIPDALSERDKVKFTVHTKTTLPTFQSPEFSVTRQHEDFVWLHDTLIETTDYAGLIIPPAPTKPDFDGPREKMQKLGEGEGSMTKEEFAKMKQELEAEYLAVFKKTVSSHEVFLQRLSSHPVLSKDRNFHVFLEYDQDLSVRRKNTKEMFGGFFKSVVKSADEVLFSGVKEVDDFFEQEKTFLINYYNRIKDSCAKADRMTRSHKNVADDYIHTAACLHSLALEEPTVIKKYLLKVAELFEKLRKVESRVSSDEDLKLTELLRYYMLNIEAAKDLLYRRTKALIDYENSNKALDKARLKSRDVKLAEAHQQECCQKFEQLSESAKDELINFKRKRVAAFRKNLIEMSELEIKHARNNVSLLQSCIDLFKNN.

At A2 the chain carries N-acetylalanine. Positions 25 to 172 (LNVDPSLQID…HVFLEYDQDL (148 aa)) constitute a PX domain. Residues 40 to 46 (SERDKVK), 99 to 105 (FDGPREK), and 113 to 116 (EGSM) contribute to the a 1,2-diacyl-sn-glycero-3-phospho-(1D-myo-inositol-4,5-bisphosphate) site. The tract at residues 169–261 (DQDLSVRRKN…HSLALEEPTV (93 aa)) is interaction with DOCK1. Positions 183-200 (FGGFFKSVVKSADEVLFS) are membrane-binding amphipathic helix. S193 carries the phosphoserine modification. One can recognise a BAR domain in the interval 202 to 404 (VKEVDDFFEQ…QSCIDLFKNN (203 aa)). K275 is modified (N6-acetyllysine).

The protein belongs to the sorting nexin family. Forms heterodimers with BAR domain-containing sorting nexins SNX1 and SNX2; does not homodimerize. The heterodimers are proposed to self-assemble into helical arrays on the membrane to stabilize and expand local membrane curvature underlying endosomal tubule formation. Thought to be a component of the originally described retromer complex (also called SNX-BAR retromer) which is a pentamer containing the heterotrimeric retromer cargo-selective complex (CSC), also described as vacuolar protein sorting subcomplex (VPS), and a heterodimeric membrane-deforming subcomplex formed between SNX1 or SNX2 and SNX5 or SNX6 (also called SNX-BAR subcomplex); the respective CSC and SNX-BAR subcomplexes associate with low affinity. Interacts with SNX1, SNX2, VPS26A, VPS29, VPS35, DCTN1, DOCK1, MIB1, PIP5K1C. Interacts with HGS; increased by PIP5K1C kinase activity and by PtdIns(3P) and/or PtdIns(3,4)P2.

It is found in the endosome. It localises to the early endosome. Its subcellular location is the early endosome membrane. The protein localises to the cell membrane. The protein resides in the cytoplasmic vesicle membrane. It is found in the cytoplasm. It localises to the cell projection. Its subcellular location is the phagocytic cup. The protein localises to the ruffle. Involved in several stages of intracellular trafficking. Interacts with membranes containing phosphatidylinositol lipids. Acts in part as component of the retromer membrane-deforming SNX-BAR subcomplex. The SNX-BAR retromer mediates retrograde transport of cargo proteins from endosomes to the trans-Golgi network (TGN) and is involved in endosome-to-plasma membrane transport for cargo protein recycling. The SNX-BAR subcomplex functions to deform the donor membrane into a tubular profile called endosome-to-TGN transport carrier (ETC). Does not have in vitro vesicle-to-membrane remodeling activity. Involved in retrograde transport of lysosomal enzyme receptor IGF2R. May function as link between endosomal transport vesicles and dynactin. Plays a role in the internalization of EGFR after EGF stimulation. Involved in EGFR endosomal sorting and degradation; the function involves PIP5K1C and is retromer-independent. Together with PIP5K1C facilitates HGS interaction with ubiquitinated EGFR, which initiates EGFR sorting to intraluminal vesicles (ILVs) of the multivesicular body for subsequent lysosomal degradation. Involved in E-cadherin sorting and degradation; inhibits PIP5K1C-mediated E-cadherin degradation. Plays a role in macropinocytosis. The chain is Sorting nexin-5 (SNX5) from Bos taurus (Bovine).